Consider the following 341-residue polypeptide: Heat-inducible transcription repressor HrcA (341 aa).

It belongs to the HrcA family.

Functionally, negative regulator of class I heat shock genes (grpE-dnaK-dnaJ and groELS operons). Prevents heat-shock induction of these operons. The chain is Heat-inducible transcription repressor HrcA from Carboxydothermus hydrogenoformans (strain ATCC BAA-161 / DSM 6008 / Z-2901).